A 277-amino-acid polypeptide reads, in one-letter code: Release factor glutamine methyltransferase (277 aa).

S-adenosyl-L-methionine is bound by residues 120-124, aspartate 143, tryptophan 171, and asparagine 186; that span reads GTGSG. 186–189 is a substrate binding site; that stretch reads NPPY.

This sequence belongs to the protein N5-glutamine methyltransferase family. PrmC subfamily.

It catalyses the reaction L-glutaminyl-[peptide chain release factor] + S-adenosyl-L-methionine = N(5)-methyl-L-glutaminyl-[peptide chain release factor] + S-adenosyl-L-homocysteine + H(+). Functionally, methylates the class 1 translation termination release factors RF1/PrfA and RF2/PrfB on the glutamine residue of the universally conserved GGQ motif. The chain is Release factor glutamine methyltransferase from Coxiella burnetii (strain RSA 493 / Nine Mile phase I).